A 99-amino-acid polypeptide reads, in one-letter code: Aspartyl/glutamyl-tRNA(Asn/Gln) amidotransferase subunit C (99 aa).

Belongs to the GatC family. In terms of assembly, heterotrimer of A, B and C subunits.

The enzyme catalyses L-glutamyl-tRNA(Gln) + L-glutamine + ATP + H2O = L-glutaminyl-tRNA(Gln) + L-glutamate + ADP + phosphate + H(+). It catalyses the reaction L-aspartyl-tRNA(Asn) + L-glutamine + ATP + H2O = L-asparaginyl-tRNA(Asn) + L-glutamate + ADP + phosphate + 2 H(+). Its function is as follows. Allows the formation of correctly charged Asn-tRNA(Asn) or Gln-tRNA(Gln) through the transamidation of misacylated Asp-tRNA(Asn) or Glu-tRNA(Gln) in organisms which lack either or both of asparaginyl-tRNA or glutaminyl-tRNA synthetases. The reaction takes place in the presence of glutamine and ATP through an activated phospho-Asp-tRNA(Asn) or phospho-Glu-tRNA(Gln). This chain is Aspartyl/glutamyl-tRNA(Asn/Gln) amidotransferase subunit C, found in Corynebacterium efficiens (strain DSM 44549 / YS-314 / AJ 12310 / JCM 11189 / NBRC 100395).